A 225-amino-acid polypeptide reads, in one-letter code: MTEPRAWFLAGTDTEIGKTFVACALLHAARRDGRSALGMKPVAAGAEWIAGEWLNEDAAQLRAASSFDPGLDRLNPYCLKTPVAPHIAAAEEGVEIDPARIRAAFESLRAQADVVIVEGVGGFRVPLGDRYDTADLARELGLPVILVVGMRLGCISHALLTVEAIAARGLTLAGWIANRIDPAMLRADENLEALRRRIDAPLLGVVPHVAGADPAQVAASLRLPG.

15–20 contributes to the ATP binding site; it reads EIGKTF. Thr19 serves as a coordination point for Mg(2+). Residue Lys40 is part of the active site. ATP is bound by residues Asp57, 118-121, 178-179, and 207-209; these read EGVG, NR, and PHV. Mg(2+) is bound by residues Asp57 and Glu118.

This sequence belongs to the dethiobiotin synthetase family. In terms of assembly, homodimer. Mg(2+) serves as cofactor.

Its subcellular location is the cytoplasm. It catalyses the reaction (7R,8S)-7,8-diammoniononanoate + CO2 + ATP = (4R,5S)-dethiobiotin + ADP + phosphate + 3 H(+). It participates in cofactor biosynthesis; biotin biosynthesis; biotin from 7,8-diaminononanoate: step 1/2. In terms of biological role, catalyzes a mechanistically unusual reaction, the ATP-dependent insertion of CO2 between the N7 and N8 nitrogen atoms of 7,8-diaminopelargonic acid (DAPA, also called 7,8-diammoniononanoate) to form a ureido ring. This chain is ATP-dependent dethiobiotin synthetase BioD, found in Aromatoleum aromaticum (strain DSM 19018 / LMG 30748 / EbN1) (Azoarcus sp. (strain EbN1)).